Reading from the N-terminus, the 246-residue chain is Biosynthetic peptidoglycan transglycosylase (246 aa).

The helical transmembrane segment at 28 to 48 threads the bilayer; the sequence is FALFLVLFLSSVVLFRFVPVP.

The protein belongs to the glycosyltransferase 51 family.

The protein localises to the cell inner membrane. It carries out the reaction [GlcNAc-(1-&gt;4)-Mur2Ac(oyl-L-Ala-gamma-D-Glu-L-Lys-D-Ala-D-Ala)](n)-di-trans,octa-cis-undecaprenyl diphosphate + beta-D-GlcNAc-(1-&gt;4)-Mur2Ac(oyl-L-Ala-gamma-D-Glu-L-Lys-D-Ala-D-Ala)-di-trans,octa-cis-undecaprenyl diphosphate = [GlcNAc-(1-&gt;4)-Mur2Ac(oyl-L-Ala-gamma-D-Glu-L-Lys-D-Ala-D-Ala)](n+1)-di-trans,octa-cis-undecaprenyl diphosphate + di-trans,octa-cis-undecaprenyl diphosphate + H(+). It functions in the pathway cell wall biogenesis; peptidoglycan biosynthesis. Its function is as follows. Peptidoglycan polymerase that catalyzes glycan chain elongation from lipid-linked precursors. The sequence is that of Biosynthetic peptidoglycan transglycosylase from Pasteurella multocida (strain Pm70).